A 393-amino-acid polypeptide reads, in one-letter code: Probable WRKY transcription factor 25 (393 aa).

The segment at residues 160-224 (MVSRNSNDGY…YKGGHNHPKP (65 aa)) is a DNA-binding region (WRKY 1). The Zn(2+) site is built by Cys191, Cys196, His219, and His221. Disordered stretches follow at residues 217 to 242 (GGHNHPKPEFTKRPSQSSLPSSVNGR) and 277 to 303 (SEYGEIDEEEEQPEMKRMKREGEDEGM). The span at 229–240 (RPSQSSLPSSVN) shows a compositional bias: polar residues. Over residues 289 to 298 (PEMKRMKREG) the composition is skewed to basic and acidic residues. The WRKY 2 DNA-binding region spans 322–387 (SDIDVLIDGF…YEGRHNHDIP (66 aa)). Zn(2+) is bound by residues Cys353, Cys358, His382, and His384.

Belongs to the WRKY group I family. In terms of assembly, interacts with MKS1. Interacts with SIB1. Interacts with VQ10 and CAMBP25/VQ15. In terms of processing, phosphorylated by MPK4. In terms of tissue distribution, highly expressed in roots and at lower levels in leaves, stems and seeds.

Its subcellular location is the nucleus. Transcription factor. Interacts specifically with the W box (5'-(T)TGAC[CT]-3'), a frequently occurring elicitor-responsive cis-acting element. Functions with WRKY33 as positive regulator of salt stress response and abscisic acid (ABA) signaling. Plays a partial role in heat stress tolerance. Functions with WRKY26 and WRKY33 as positive regulator of plant thermotolerance by partially participating in ethylene-response signal transduction pathway. The protein is Probable WRKY transcription factor 25 (WRKY25) of Arabidopsis thaliana (Mouse-ear cress).